The following is a 162-amino-acid chain: D-aminoacyl-tRNA deacylase (162 aa).

Residues 145-146 carry the Gly-cisPro motif, important for rejection of L-amino acids motif; sequence GP.

The protein belongs to the DTD family. As to quaternary structure, homodimer.

It localises to the cytoplasm. It catalyses the reaction glycyl-tRNA(Ala) + H2O = tRNA(Ala) + glycine + H(+). The catalysed reaction is a D-aminoacyl-tRNA + H2O = a tRNA + a D-alpha-amino acid + H(+). An aminoacyl-tRNA editing enzyme that deacylates mischarged D-aminoacyl-tRNAs. Also deacylates mischarged glycyl-tRNA(Ala), protecting cells against glycine mischarging by AlaRS. Acts via tRNA-based rather than protein-based catalysis; rejects L-amino acids rather than detecting D-amino acids in the active site. By recycling D-aminoacyl-tRNA to D-amino acids and free tRNA molecules, this enzyme counteracts the toxicity associated with the formation of D-aminoacyl-tRNA entities in vivo and helps enforce protein L-homochirality. The polypeptide is D-aminoacyl-tRNA deacylase (Bifidobacterium longum subsp. infantis (strain ATCC 15697 / DSM 20088 / JCM 1222 / NCTC 11817 / S12)).